The chain runs to 128 residues: uncharacterized protein (128 aa).

This is an uncharacterized protein from Archaeoglobus fulgidus (strain ATCC 49558 / DSM 4304 / JCM 9628 / NBRC 100126 / VC-16).